We begin with the raw amino-acid sequence, 230 residues long: Demethylmenaquinone methyltransferase (230 aa).

S-adenosyl-L-methionine is bound by residues threonine 62, aspartate 80, 100–101, and serine 117; that span reads DA.

This sequence belongs to the class I-like SAM-binding methyltransferase superfamily. MenG/UbiE family.

It catalyses the reaction a 2-demethylmenaquinol + S-adenosyl-L-methionine = a menaquinol + S-adenosyl-L-homocysteine + H(+). It participates in quinol/quinone metabolism; menaquinone biosynthesis; menaquinol from 1,4-dihydroxy-2-naphthoate: step 2/2. In terms of biological role, methyltransferase required for the conversion of demethylmenaquinol (DMKH2) to menaquinol (MKH2). This is Demethylmenaquinone methyltransferase from Mycobacterium sp. (strain JLS).